The sequence spans 479 residues: Ribosomal RNA small subunit methyltransferase F (479 aa).

Residues 125–131 (AAAPGSK), Glu149, Asp176, and Asp194 contribute to the S-adenosyl-L-methionine site. The active-site Nucleophile is Cys247.

Belongs to the class I-like SAM-binding methyltransferase superfamily. RsmB/NOP family.

It is found in the cytoplasm. It carries out the reaction cytidine(1407) in 16S rRNA + S-adenosyl-L-methionine = 5-methylcytidine(1407) in 16S rRNA + S-adenosyl-L-homocysteine + H(+). Functionally, specifically methylates the cytosine at position 1407 (m5C1407) of 16S rRNA. This chain is Ribosomal RNA small subunit methyltransferase F, found in Escherichia coli (strain ATCC 8739 / DSM 1576 / NBRC 3972 / NCIMB 8545 / WDCM 00012 / Crooks).